Here is an 872-residue protein sequence, read N- to C-terminus: Coatomer subunit gamma-2 (872 aa).

HEAT repeat units follow at residues 64 to 101, 283 to 320, 321 to 355, 356 to 392, 395 to 430, and 467 to 504; these read MEAT…ISED, RELA…KHPS, AVTA…GSES, SVDR…KYPR, SVMM…ENPD, and PTPS…QNEP.

It belongs to the COPG family. As to quaternary structure, oligomeric complex.

It is found in the cytoplasm. Its subcellular location is the golgi apparatus membrane. It localises to the cytoplasmic vesicle. The protein localises to the COPI-coated vesicle membrane. Functionally, the coatomer is a cytosolic protein complex that binds to dilysine motifs and reversibly associates with Golgi non-clathrin-coated vesicles, which further mediate biosynthetic protein transport from the ER, via the Golgi up to the trans Golgi network. Coatomer complex is required for budding from Golgi membranes, and is essential for the retrograde Golgi-to-ER transport of dilysine-tagged proteins. This chain is Coatomer subunit gamma-2 (copg2), found in Xenopus tropicalis (Western clawed frog).